Here is a 340-residue protein sequence, read N- to C-terminus: Solute-binding protein Dde_0634 (340 aa).

The signal sequence occupies residues 1-29 (MKSTFAALLIMVGCLVSGALLTGSEAAAA). (indol-3-yl)acetate-binding positions include Tyr99, Arg172, 210–213 (TSLD), and Tyr235.

This sequence belongs to the bacterial solute-binding protein 7 family. In terms of assembly, the complex is comprised of an extracytoplasmic solute-binding protein and a heteromeric permease formed by two transmembrane proteins.

It is found in the periplasm. In terms of biological role, solute-binding protein that binds indole-3-pyruvate and indole-3-acetate (in vitro). Can also bind D-tryptophan (in vitro), but that is probably not a physiological ligand. Probably part of a tripartite ATP-independent periplasmic (TRAP) transport system that mediates solute transport into the cytoplasm. This chain is Solute-binding protein Dde_0634, found in Oleidesulfovibrio alaskensis (strain ATCC BAA-1058 / DSM 17464 / G20) (Desulfovibrio alaskensis).